Here is a 60-residue protein sequence, read N- to C-terminus: DNA-directed RNA polymerase subunit Rpo6 (60 aa).

This sequence belongs to the archaeal Rpo6/eukaryotic RPB6 RNA polymerase subunit family. As to quaternary structure, part of the RNA polymerase complex.

The protein localises to the cytoplasm. The catalysed reaction is RNA(n) + a ribonucleoside 5'-triphosphate = RNA(n+1) + diphosphate. Functionally, DNA-dependent RNA polymerase (RNAP) catalyzes the transcription of DNA into RNA using the four ribonucleoside triphosphates as substrates. This chain is DNA-directed RNA polymerase subunit Rpo6, found in Halobacterium salinarum (strain ATCC 700922 / JCM 11081 / NRC-1) (Halobacterium halobium).